The following is a 308-amino-acid chain: Transaldolase (308 aa).

The active-site Schiff-base intermediate with substrate is the K125.

This sequence belongs to the transaldolase family. Type 1 subfamily. As to quaternary structure, homodimer.

Its subcellular location is the cytoplasm. It catalyses the reaction D-sedoheptulose 7-phosphate + D-glyceraldehyde 3-phosphate = D-erythrose 4-phosphate + beta-D-fructose 6-phosphate. It participates in carbohydrate degradation; pentose phosphate pathway; D-glyceraldehyde 3-phosphate and beta-D-fructose 6-phosphate from D-ribose 5-phosphate and D-xylulose 5-phosphate (non-oxidative stage): step 2/3. In terms of biological role, transaldolase is important for the balance of metabolites in the pentose-phosphate pathway. This Pseudomonas entomophila (strain L48) protein is Transaldolase.